Consider the following 188-residue polypeptide: Large ribosomal subunit protein uL10 (188 aa).

Belongs to the universal ribosomal protein uL10 family. Part of the ribosomal stalk of the 50S ribosomal subunit. The N-terminus interacts with L11 and the large rRNA to form the base of the stalk. The C-terminus forms an elongated spine to which L12 dimers bind in a sequential fashion forming a multimeric L10(L12)X complex.

Functionally, forms part of the ribosomal stalk, playing a central role in the interaction of the ribosome with GTP-bound translation factors. The protein is Large ribosomal subunit protein uL10 of Crocosphaera subtropica (strain ATCC 51142 / BH68) (Cyanothece sp. (strain ATCC 51142)).